A 345-amino-acid chain; its full sequence is Transcriptional activator hacA (345 aa).

Residues 1–106 (MSCDMEKTMS…AQTSRERKRL (106 aa)) are disordered. Over residues 30–40 (PADTSLNSADV) the composition is skewed to polar residues. 2 stretches are compositionally biased toward basic and acidic residues: residues 41 to 51 (KTQEVKPEEKK) and 77 to 91 (KTED…ERVL). Residues 83 to 146 (EQRRIERVLR…NRLSQQLAQL (64 aa)) enclose the bZIP domain. The basic motif stretch occupies residues 85 to 138 (RRIERVLRNRAAAQTSRERKRLEMEKLENEKIQMEQQNQFLLQRLSQMEAENNR). Residues 139–146 (LSQQLAQL) are leucine-zipper. A disordered region spans residues 186 to 210 (RIPFPTPSLSDYSPTLKPSTLAESS). Residues 192–210 (PSLSDYSPTLKPSTLAESS) show a composition bias toward polar residues.

The protein belongs to the bZIP family. In terms of assembly, homodimer.

Its subcellular location is the nucleus. Functionally, transcriptional activator involved in the unfolded protein response (UPR) pathway. Recognizes and binds to the UPR element (UPRE) in the promoter of UPR-regulated genes. Increases the synthesis of endoplasmic reticulum-resident proteins required for protein folding as well as components of the secretory pathway. This chain is Transcriptional activator hacA (hacA), found in Aspergillus oryzae (strain ATCC 42149 / RIB 40) (Yellow koji mold).